Here is a 304-residue protein sequence, read N- to C-terminus: Thyroxine 5-deiodinase (304 aa).

Residues Met-1 to Gly-22 form a disordered region. Residues Met-1 to Thr-42 are Cytoplasmic-facing. A helical; Signal-anchor for type II membrane protein transmembrane segment spans residues Ala-43–Leu-62. Over Asp-63 to Leu-304 the chain is Extracellular. Residue Sec-170 is part of the active site. Residue Sec-170 is a non-standard amino acid, selenocysteine.

The protein belongs to the iodothyronine deiodinase family. Monomer. Homodimer. May undergo minor heretodimerization with DIO1 and DIO2. Neonatal skin, placenta, skeletal muscle and cerebral cortex.

Its subcellular location is the cell membrane. It localises to the endosome membrane. It carries out the reaction 3,3',5'-triiodo-L-thyronine + iodide + A + H(+) = L-thyroxine + AH2. The catalysed reaction is 3,3'-diiodo-L-thyronine + iodide + A + H(+) = 3,3',5-triiodo-L-thyronine + AH2. The enzyme catalyses 3-iodo-L-thyronine + iodide + A + H(+) = 3,5-diiodo-L-thyronine + AH2. It catalyses the reaction L-thyronine + iodide + A + H(+) = 3-iodo-L-thyronine + AH2. It carries out the reaction 3',5'-diiodo-L-thyronine + iodide + A + H(+) = 3,3',5'-triiodo-L-thyronine + AH2. The catalysed reaction is 3'-iodo-L-thyronine + iodide + A + H(+) = 3,3'-diiodo-L-thyronine + AH2. The enzyme catalyses 3,3',5'-triiodothyronamine + iodide + A + H(+) = 3,3',5,5'-tetraiodothyronamine + AH2. It catalyses the reaction 3',5'-diiodothyronamine + iodide + A + H(+) = 3,3',5'-triiodothyronamine + AH2. It carries out the reaction 3,3'-diiodothyronamine + iodide + A + H(+) = 3,3',5-triiodothyronamine + AH2. The catalysed reaction is 3-iodothyronamine + iodide + A + H(+) = 3,5-diiodothyronamine + AH2. The enzyme catalyses 3'-iodothyronamine + iodide + A + H(+) = 3,3'-diiodothyronamine + AH2. It catalyses the reaction thyronamine + iodide + A + H(+) = 3-iodothyronamine + AH2. In terms of biological role, plays a crucial role in the metabolism of thyroid hormones (TH) and has specific roles in TH activation and inactivation by deiodination. Catalyzes the deiodination of L-thyroxine (T4) to 3,3',5'-triiodothyronine (rT3), 3,5-diiodothyronine (3,5-T2) to 3-monoiodothyronine (3-T1), rT3 to 3',5'-diiodothyronine (3',5'-T2) and 3,3'-diiodothyronine (3,3'-T2) to 3'-monoiodothyronine (3'-T1) via inner-ring deiodination (IRD). Catalyzes the deiodination of 3,5,3'-triiodothyronine (T3) to 3,3'-diiodothyronine (3,3'-T2) via IRD. Catalyzes the deiodination of 3-T1 to L-thyronine (T0) via outer-ring deiodination (ORD). Catalyzes the tyrosyl ring deiodinations of T4AM (3,3',5,5'-tetraiodothyronamine), rT3AM (3,3',5'-triiodothyronamine), T3AM (3,5,3'-triiodothyronamine), 3,5-T2AM (3,5-diiodothyronamine), 3,3'-T2AM (3,3'-diiodothyronamine) and 3-T1AM (3-iodothyronamine). The sequence is that of Thyroxine 5-deiodinase (Dio3) from Rattus norvegicus (Rat).